The following is a 271-amino-acid chain: Putative phosphoenolpyruvate synthase regulatory protein (271 aa).

151–158 contacts ADP; sequence GVSRSGKT.

This sequence belongs to the pyruvate, phosphate/water dikinase regulatory protein family. PSRP subfamily.

It carries out the reaction [pyruvate, water dikinase] + ADP = [pyruvate, water dikinase]-phosphate + AMP + H(+). The enzyme catalyses [pyruvate, water dikinase]-phosphate + phosphate + H(+) = [pyruvate, water dikinase] + diphosphate. Its function is as follows. Bifunctional serine/threonine kinase and phosphorylase involved in the regulation of the phosphoenolpyruvate synthase (PEPS) by catalyzing its phosphorylation/dephosphorylation. The sequence is that of Putative phosphoenolpyruvate synthase regulatory protein from Burkholderia orbicola (strain MC0-3).